A 541-amino-acid chain; its full sequence is Malate synthase (541 aa).

Catalysis depends on Arg169, which acts as the Proton acceptor. Catalysis depends on Asp454, which acts as the Proton donor.

It belongs to the malate synthase family.

Its subcellular location is the cytoplasm. The catalysed reaction is glyoxylate + acetyl-CoA + H2O = (S)-malate + CoA + H(+). The protein operates within carbohydrate metabolism; glyoxylate cycle; (S)-malate from isocitrate: step 2/2. The sequence is that of Malate synthase (aceB) from Streptomyces clavuligerus.